Consider the following 181-residue polypeptide: Thymidine kinase (181 aa).

13 to 20 (GPMFSGKS) contributes to the ATP binding site. The Proton acceptor role is filled by Glu-85. Phe-115 provides a ligand contact to substrate. Positions 140 and 143 each coordinate Zn(2+). Residue 159–163 (IEIIG) participates in substrate binding. Zn(2+) contacts are provided by Cys-172 and Cys-175.

The protein belongs to the thymidine kinase family.

It catalyses the reaction thymidine + ATP = dTMP + ADP + H(+). The polypeptide is Thymidine kinase (TK) (Yaba monkey tumor virus (strain VR587) (YMTV)).